Reading from the N-terminus, the 62-residue chain is MFRVTSVLLVIVLLNLVVLTNACHMDCSKMTCCSGICCFYCGRPMCPGTRRALLQRLVGHQR.

An N-terminal signal peptide occupies residues 1-22; sequence MFRVTSVLLVIVLLNLVVLTNA. Disulfide bonds link Cys-23–Cys-33, Cys-27–Cys-38, Cys-32–Cys-41, and Cys-37–Cys-46. Positions 23-49 are excised as a propeptide; that stretch reads CHMDCSKMTCCSGICCFYCGRPMCPGT.

The protein belongs to the conotoxin I2 superfamily. In terms of tissue distribution, expressed by the venom duct.

It localises to the secreted. Functionally, probable neurotoxin. The chain is Conotoxin Im11.9 from Conus imperialis (Imperial cone).